Consider the following 351-residue polypeptide: MVLSIRSQIIIGVVSSIPLTSTILAIAYILMWFNGHMTLTLTLTTIITSCLTLLICSIFINPLIQKIKQFNIKTKQFANGNYASNDKTFNSPKEIYELNQSFNKMASEITQQMNQIKSEQQEKTELIQNLAHDLKTPLASIISYSEGLRDGIITKDHEIKESYDILIKQANRLSTLFDDMTHIITLNTGKTYPPELIQLDQLLVSILQPYEQRIKHENRTLEVNFCNEIDAFYQYRTPLERILTNLLDNALKFSNVGSRIDINISENEDQDTIDIAISDEGIGIIPELQERIFERTFRVENSRNTKTGGSGLGLYIANELAQQNNAKISVSSDIDVGTTMTVTLHKLDITS.

The next 2 membrane-spanning stretches (helical) occupy residues 9 to 29 (IIIGVVSSIPLTSTILAIAYI) and 40 to 60 (TLTLTTIITSCLTLLICSIFI). The region spanning 61 to 114 (NPLIQKIKQFNIKTKQFANGNYASNDKTFNSPKEIYELNQSFNKMASEITQQMN) is the HAMP domain. The region spanning 129 to 348 (NLAHDLKTPL…TMTVTLHKLD (220 aa)) is the Histidine kinase domain. At His132 the chain carries Phosphohistidine; by autocatalysis.

Post-translationally, autophosphorylated.

The protein localises to the cell membrane. It carries out the reaction ATP + protein L-histidine = ADP + protein N-phospho-L-histidine.. Its function is as follows. Member of the two-component regulatory system SaeR/SaeS involved in the regulation of staphylococcal virulence factors in a strain-dependent fashion. Probably functions as a membrane-associated protein kinase that upon sensing the appropriate signal, autophosphorylates and in turn activates the cytosolic response regulator SaeR. SaeR/SaeS activates the expression of exoproteins involved in adhesion and invasion of host cells, including hemolysins (hla, hlb, hlgC), coa, DNase, spa and cell wall-associated proteins (emp, eap, fnbA, fnbB, efb). Represses the expression of type 5 capsular polysaccharide (cap operon). Also modulates the expression of several other genes. The chain is Histidine protein kinase SaeS (saeS) from Staphylococcus aureus (strain Newman).